A 38-amino-acid polypeptide reads, in one-letter code: Photosystem II reaction center protein L (38 aa).

The helical transmembrane segment at 17 to 37 (SLYWGLLLIFVLAVLFSNYFF) threads the bilayer.

The protein belongs to the PsbL family. In terms of assembly, PSII is composed of 1 copy each of membrane proteins PsbA, PsbB, PsbC, PsbD, PsbE, PsbF, PsbH, PsbI, PsbJ, PsbK, PsbL, PsbM, PsbT, PsbX, PsbY, PsbZ, Psb30/Ycf12, at least 3 peripheral proteins of the oxygen-evolving complex and a large number of cofactors. It forms dimeric complexes.

Its subcellular location is the plastid. The protein resides in the chloroplast thylakoid membrane. In terms of biological role, one of the components of the core complex of photosystem II (PSII). PSII is a light-driven water:plastoquinone oxidoreductase that uses light energy to abstract electrons from H(2)O, generating O(2) and a proton gradient subsequently used for ATP formation. It consists of a core antenna complex that captures photons, and an electron transfer chain that converts photonic excitation into a charge separation. This subunit is found at the monomer-monomer interface and is required for correct PSII assembly and/or dimerization. This is Photosystem II reaction center protein L from Gnetum gnemon (Spanish joint-fir).